The chain runs to 1282 residues: Protein PIR (1282 aa).

As to quaternary structure, binds NAP1 and ROP2, but not ROP8. In terms of tissue distribution, expressed in roots, root hairs, hypocotyls, cotyledons, stems, leaves, trichomes and flowers.

Its function is as follows. Involved in regulation of actin and microtubule organization. Part of a WAVE complex that activates the ARP2/3 complex. Interacts with the active form of RHO-family GTPases. The protein is Protein PIR (PIR) of Arabidopsis thaliana (Mouse-ear cress).